A 372-amino-acid chain; its full sequence is Aminomethyltransferase (372 aa).

Belongs to the GcvT family. The glycine cleavage system is composed of four proteins: P, T, L and H.

The catalysed reaction is N(6)-[(R)-S(8)-aminomethyldihydrolipoyl]-L-lysyl-[protein] + (6S)-5,6,7,8-tetrahydrofolate = N(6)-[(R)-dihydrolipoyl]-L-lysyl-[protein] + (6R)-5,10-methylene-5,6,7,8-tetrahydrofolate + NH4(+). The glycine cleavage system catalyzes the degradation of glycine. The protein is Aminomethyltransferase of Prochlorococcus marinus (strain NATL2A).